The primary structure comprises 109 residues: RNA-binding protein Hfq (109 aa).

The region spanning 9–68 (DPFLNALRKEKVSVSVYLVNGIKLQGQVEAFDQFCIVLRNTVNQMVYKHAISTIVPAKSV) is the Sm domain. The disordered stretch occupies residues 77-109 (PYHQNSNDEQDENVDDIHSDDLEIQENEGNIHE).

The protein belongs to the Hfq family. Homohexamer.

Its function is as follows. RNA chaperone that binds small regulatory RNA (sRNAs) and mRNAs to facilitate mRNA translational regulation in response to envelope stress, environmental stress and changes in metabolite concentrations. Also binds with high specificity to tRNAs. In Francisella tularensis subsp. tularensis (strain FSC 198), this protein is RNA-binding protein Hfq.